The sequence spans 105 residues: Large ribosomal subunit protein bL21c (105 aa).

It belongs to the bacterial ribosomal protein bL21 family. In terms of assembly, part of the 50S ribosomal subunit.

The protein resides in the plastid. Its subcellular location is the chloroplast. This protein binds to 23S rRNA. This chain is Large ribosomal subunit protein bL21c, found in Phaeodactylum tricornutum (strain CCAP 1055/1).